The sequence spans 269 residues: 4-hydroxy-tetrahydrodipicolinate reductase (269 aa).

NAD(+)-binding positions include 11–16 and E37; that span reads GASGRM. An NADP(+)-binding site is contributed by R38. NAD(+) contacts are provided by residues 101–103 and 125–128; these read GTT and AGNM. H158 acts as the Proton donor/acceptor in catalysis. H159 serves as a coordination point for (S)-2,3,4,5-tetrahydrodipicolinate. Residue K162 is the Proton donor of the active site. 168–169 contacts (S)-2,3,4,5-tetrahydrodipicolinate; it reads GT.

It belongs to the DapB family.

The protein localises to the cytoplasm. The enzyme catalyses (S)-2,3,4,5-tetrahydrodipicolinate + NAD(+) + H2O = (2S,4S)-4-hydroxy-2,3,4,5-tetrahydrodipicolinate + NADH + H(+). It carries out the reaction (S)-2,3,4,5-tetrahydrodipicolinate + NADP(+) + H2O = (2S,4S)-4-hydroxy-2,3,4,5-tetrahydrodipicolinate + NADPH + H(+). It participates in amino-acid biosynthesis; L-lysine biosynthesis via DAP pathway; (S)-tetrahydrodipicolinate from L-aspartate: step 4/4. Functionally, catalyzes the conversion of 4-hydroxy-tetrahydrodipicolinate (HTPA) to tetrahydrodipicolinate. This chain is 4-hydroxy-tetrahydrodipicolinate reductase, found in Ruegeria sp. (strain TM1040) (Silicibacter sp.).